The following is a 197-amino-acid chain: Probable UbiX-like flavin prenyltransferase (197 aa).

Residues 9 to 11 (GAT), serine 36, 87 to 90 (SMKT), and arginine 122 contribute to the FMN site.

The protein belongs to the UbiX/PAD1 family. YclB subfamily. In terms of assembly, homododecamer.

The catalysed reaction is dimethylallyl phosphate + FMNH2 = prenylated FMNH2 + phosphate. Functionally, involved in the non-oxidative decarboxylation and detoxification of phenolic derivatives under both aerobic and anaerobic conditions. Flavin prenyltransferase that catalyzes the synthesis of the prenylated FMN cofactor (prenyl-FMN) for phenolic acid decarboxylase. This is Probable UbiX-like flavin prenyltransferase from Escherichia coli O157:H7.